An 85-amino-acid polypeptide reads, in one-letter code: UPF0297 protein CHY_0540 (85 aa).

It belongs to the UPF0297 family.

The polypeptide is UPF0297 protein CHY_0540 (Carboxydothermus hydrogenoformans (strain ATCC BAA-161 / DSM 6008 / Z-2901)).